The primary structure comprises 409 residues: Putative kinase Y4dM (409 aa).

Asp-293 functions as the Proton acceptor in the catalytic mechanism.

Belongs to the HipA Ser/Thr kinase family.

The sequence is that of Putative kinase Y4dM from Sinorhizobium fredii (strain NBRC 101917 / NGR234).